The primary structure comprises 1872 residues: Ral GTPase-activating protein subunit alpha-2 (1872 aa).

3 positions are modified to phosphoserine: Ser-373, Ser-376, and Ser-379. Residues 446–469 (DKKDVAEEDADKLGLSETDSKEVS) are compositionally biased toward basic and acidic residues. Positions 446-481 (DKKDVAEEDADKLGLSETDSKEVSSESSGHKRSSSW) are disordered. Phosphoserine is present on residues Ser-486 and Ser-696. 2 disordered regions span residues 711 to 730 (FRSA…NTVR) and 758 to 849 (QPVP…TGSD). Position 715 is a phosphothreonine; by PKB (Thr-715). Residues 775 to 795 (SDSSQGQKVENSQNLSSSEPK) are compositionally biased toward polar residues. Over residues 796–810 (SVQESKGHVTHEHEG) the composition is skewed to basic and acidic residues. Ser-819 and Ser-820 each carry phosphoserine. Residues 824–843 (LDLKEESQQTHGRCRERQKS) show a composition bias toward basic and acidic residues. The residue at position 1592 (Ser-1592) is a Phosphoserine. The 209-residue stretch at 1634-1842 (LKNLDSRQCR…EERALYLEAI (209 aa)) folds into the Rap-GAP domain.

Component of the heterodimeric RalGAP2 complex with RALGAPB. Heterodimerization is required for activity. As to expression, highly expressed in lung, liver, testis and thymus with lower levels in brain and heart (at protein level).

The protein localises to the cytoplasm. Catalytic subunit of the heterodimeric RalGAP2 complex which acts as a GTPase activator for the Ras-like small GTPases RALA and RALB. This Rattus norvegicus (Rat) protein is Ral GTPase-activating protein subunit alpha-2.